The chain runs to 155 residues: SsrA-binding protein (155 aa).

It belongs to the SmpB family.

It is found in the cytoplasm. Its function is as follows. Required for rescue of stalled ribosomes mediated by trans-translation. Binds to transfer-messenger RNA (tmRNA), required for stable association of tmRNA with ribosomes. tmRNA and SmpB together mimic tRNA shape, replacing the anticodon stem-loop with SmpB. tmRNA is encoded by the ssrA gene; the 2 termini fold to resemble tRNA(Ala) and it encodes a 'tag peptide', a short internal open reading frame. During trans-translation Ala-aminoacylated tmRNA acts like a tRNA, entering the A-site of stalled ribosomes, displacing the stalled mRNA. The ribosome then switches to translate the ORF on the tmRNA; the nascent peptide is terminated with the 'tag peptide' encoded by the tmRNA and targeted for degradation. The ribosome is freed to recommence translation, which seems to be the essential function of trans-translation. This Bordetella parapertussis (strain 12822 / ATCC BAA-587 / NCTC 13253) protein is SsrA-binding protein.